The following is a 470-amino-acid chain: tRNA-2-methylthio-N(6)-dimethylallyladenosine synthase (470 aa).

The region spanning 20-138 is the MTTase N-terminal domain; sequence PRVHIETFGC…LPELVERARS (119 aa). Cys-29, Cys-65, Cys-99, Cys-176, Cys-180, and Cys-183 together coordinate [4Fe-4S] cluster. Residues 162–398 enclose the Radical SAM core domain; the sequence is REGDLKAWVT…MEVQNRIARA (237 aa). A TRAM domain is found at 401 to 464; that stretch reads EARVGKVYDI…TWTLEGELVE (64 aa).

The protein belongs to the methylthiotransferase family. MiaB subfamily. As to quaternary structure, monomer. Requires [4Fe-4S] cluster as cofactor.

The protein resides in the cytoplasm. It carries out the reaction N(6)-dimethylallyladenosine(37) in tRNA + (sulfur carrier)-SH + AH2 + 2 S-adenosyl-L-methionine = 2-methylsulfanyl-N(6)-dimethylallyladenosine(37) in tRNA + (sulfur carrier)-H + 5'-deoxyadenosine + L-methionine + A + S-adenosyl-L-homocysteine + 2 H(+). Its function is as follows. Catalyzes the methylthiolation of N6-(dimethylallyl)adenosine (i(6)A), leading to the formation of 2-methylthio-N6-(dimethylallyl)adenosine (ms(2)i(6)A) at position 37 in tRNAs that read codons beginning with uridine. The protein is tRNA-2-methylthio-N(6)-dimethylallyladenosine synthase of Symbiobacterium thermophilum (strain DSM 24528 / JCM 14929 / IAM 14863 / T).